A 621-amino-acid chain; its full sequence is Chaperone protein dnaK (621 aa).

The disordered stretch occupies residues V597–A621.

Belongs to the heat shock protein 70 family.

It localises to the plastid. The protein localises to the chloroplast. Its function is as follows. Acts as a chaperone. In Gracilaria tenuistipitata var. liui (Red alga), this protein is Chaperone protein dnaK.